A 167-amino-acid polypeptide reads, in one-letter code: Transcriptional repressor NrdR (167 aa).

The segment at 3-34 (CPFCRNPDSRVVDSRMADDGSAIRRRRQCPEC) is a zinc-finger region. The region spanning 46-136 (LSVIKRSGVG…VYQAFESLED (91 aa)) is the ATP-cone domain. The interval 148–167 (AQEDAAERPATPRKPEKTSL) is disordered.

This sequence belongs to the NrdR family. Zn(2+) serves as cofactor.

Functionally, negatively regulates transcription of bacterial ribonucleotide reductase nrd genes and operons by binding to NrdR-boxes. This Pseudarthrobacter chlorophenolicus (strain ATCC 700700 / DSM 12829 / CIP 107037 / JCM 12360 / KCTC 9906 / NCIMB 13794 / A6) (Arthrobacter chlorophenolicus) protein is Transcriptional repressor NrdR.